Here is a 1824-residue protein sequence, read N- to C-terminus: E3 ubiquitin-protein ligase UBR1 (1824 aa).

The UBR-type zinc-finger motif lies at 107 to 178 (TVCGKVFKNG…KDQYCELHLA (72 aa)). 2 disordered regions span residues 1006–1043 (KQAP…ENRA) and 1073–1093 (ADTE…DWED). A compositionally biased stretch (basic and acidic residues) spans 1033-1043 (EQAREERENRA). The RING-type; atypical zinc-finger motif lies at 1126–1220 (FKCILCFENC…VEFQCPYCRT (95 aa)).

The protein belongs to the E3 ubiquitin-protein ligase UBR1-like family.

The enzyme catalyses S-ubiquitinyl-[E2 ubiquitin-conjugating enzyme]-L-cysteine + [acceptor protein]-L-lysine = [E2 ubiquitin-conjugating enzyme]-L-cysteine + N(6)-ubiquitinyl-[acceptor protein]-L-lysine.. It participates in protein modification; protein ubiquitination. Its function is as follows. E3 ubiquitin-protein ligase which is a component of the N-end rule pathway. Recognizes and binds to proteins bearing specific N-terminal residues that are destabilizing according to the N-end rule, leading to their ubiquitination and subsequent degradation. This Drosophila melanogaster (Fruit fly) protein is E3 ubiquitin-protein ligase UBR1.